Consider the following 341-residue polypeptide: TERF1-interacting nuclear factor 2 (341 aa).

The residue at position 2 (Ala-2) is an N-acetylalanine. Positions 243-265 (HRFNLAPLGKRKSRSHWTSAKAC) match the TBM motif. The Nuclear localization signal signature appears at 249–255 (PLGKRKS). Residues 283–341 (PAQDLSNPKSREEPGAASAASVGTEPVCTEEAKTPSRPLGKRALEETPPDSPAASRRTV) are disordered.

As to quaternary structure, monomer. Found in a complex with POT1; TERF1 and TNKS1. Component of the shelterin complex (telosome) composed of TERF1, TERF2, TINF2, TERF2IP, ACD and POT1. Interacts with TERF1.

It is found in the nucleus. The protein localises to the chromosome. The protein resides in the telomere. Its function is as follows. Component of the shelterin complex (telosome) that is involved in the regulation of telomere length and protection. Shelterin associates with arrays of double-stranded TTAGGG repeats added by telomerase and protects chromosome ends; without its protective activity, telomeres are no longer hidden from the DNA damage surveillance and chromosome ends are inappropriately processed by DNA repair pathways. Plays a role in shelterin complex assembly. This Mus musculus (Mouse) protein is TERF1-interacting nuclear factor 2 (Tinf2).